The following is a 430-amino-acid chain: Asparagine--tRNA ligase (430 aa).

Belongs to the class-II aminoacyl-tRNA synthetase family. In terms of assembly, homodimer.

It is found in the cytoplasm. It catalyses the reaction tRNA(Asn) + L-asparagine + ATP = L-asparaginyl-tRNA(Asn) + AMP + diphosphate + H(+). This is Asparagine--tRNA ligase from Staphylococcus haemolyticus (strain JCSC1435).